A 273-amino-acid polypeptide reads, in one-letter code: 4-hydroxy-tetrahydrodipicolinate reductase (273 aa).

NAD(+)-binding positions include 11-16 (GALGRM), 102-104 (GTT), and 126-129 (SPNF). His-159 acts as the Proton donor/acceptor in catalysis. His-160 is a (S)-2,3,4,5-tetrahydrodipicolinate binding site. The active-site Proton donor is the Lys-163. 169-170 (GT) provides a ligand contact to (S)-2,3,4,5-tetrahydrodipicolinate.

This sequence belongs to the DapB family. As to quaternary structure, homotetramer.

The protein resides in the cytoplasm. It carries out the reaction (S)-2,3,4,5-tetrahydrodipicolinate + NAD(+) + H2O = (2S,4S)-4-hydroxy-2,3,4,5-tetrahydrodipicolinate + NADH + H(+). It catalyses the reaction (S)-2,3,4,5-tetrahydrodipicolinate + NADP(+) + H2O = (2S,4S)-4-hydroxy-2,3,4,5-tetrahydrodipicolinate + NADPH + H(+). It participates in amino-acid biosynthesis; L-lysine biosynthesis via DAP pathway; (S)-tetrahydrodipicolinate from L-aspartate: step 4/4. Functionally, catalyzes the conversion of 4-hydroxy-tetrahydrodipicolinate (HTPA) to tetrahydrodipicolinate. This is 4-hydroxy-tetrahydrodipicolinate reductase from Buchnera aphidicola subsp. Cinara cedri (strain Cc).